Here is a 2170-residue protein sequence, read N- to C-terminus: Brefeldin A-inhibited guanine nucleotide-exchange protein 3 (2170 aa).

Serine 471 bears the Phosphoserine mark. Disordered regions lie at residues 489–547 and 613–634; these read EHTP…MGKV and AAEK…CSLA. The span at 503–524 shows a compositional bias: polar residues; that stretch reads ISISVTTDTGQTTLEGELGQTT. An SEC7 domain is found at 579 to 792; it reads RTRSYGSRYS…EELYHQVLDR (214 aa). The segment covering 614–623 has biased composition (basic and acidic residues); that stretch reads AEKDSGRSDV. Serine 628, serine 632, and serine 1045 each carry phosphoserine. The helical transmembrane segment at 1488–1508 threads the bilayer; the sequence is PGFGIYAVVHLLLPVMSLWLL. The disordered stretch occupies residues 1843-1872; the sequence is SSDSSQQCSSEDEDIFEETAQVSPPRGKEK. Phosphoserine is present on serine 1881. Over residues 1938 to 1955 the composition is skewed to polar residues; that stretch reads FQSESSTPSTGGFSGKNT. 2 disordered regions span residues 1938–1997 and 2024–2058; these read FQSE…RKKE and KRRQ…PLLQ. The span at 1956–1966 shows a compositional bias: basic and acidic residues; the sequence is PSEDDRREHLS. Residues serine 1975 and serine 1984 each carry the phosphoserine modification. Composition is skewed to basic and acidic residues over residues 1986-1997 and 2036-2045; these read KTEKKDPGRKKE and KEVKVDKKGE. Phosphoserine occurs at positions 2072, 2074, 2088, 2094, and 2096. Positions 2078–2097 are disordered; sequence ELLRQEKRPRSGSTGSSLSV. Low complexity predominate over residues 2088–2097; sequence SGSTGSSLSV.

As to quaternary structure, interacts with PHB2. In terms of tissue distribution, expressed in pancreatic islet (insulin granules of islet alpha and beta cells) and brain (at protein level).

The protein localises to the cytoplasmic vesicle. Its subcellular location is the secretory vesicle. The protein resides in the secretory vesicle membrane. In terms of biological role, participates in the regulation of systemic glucose homeostasis, where it negatively regulates insulin granule biogenesis in pancreatic islet beta cells. Also regulates glucagon granule production in pancreatic alpha cells. Inhibits nuclear translocation of the transcriptional coregulator PHB2 and may enhance estrogen receptor alpha (ESR1) transcriptional activity in breast cancer cells. In Mus musculus (Mouse), this protein is Brefeldin A-inhibited guanine nucleotide-exchange protein 3.